Here is a 325-residue protein sequence, read N- to C-terminus: N-acetyl-gamma-glutamyl-phosphate reductase (325 aa).

Cys-131 is a catalytic residue.

The protein belongs to the NAGSA dehydrogenase family. Type 1 subfamily.

Its subcellular location is the cytoplasm. It carries out the reaction N-acetyl-L-glutamate 5-semialdehyde + phosphate + NADP(+) = N-acetyl-L-glutamyl 5-phosphate + NADPH + H(+). It functions in the pathway amino-acid biosynthesis; L-arginine biosynthesis; N(2)-acetyl-L-ornithine from L-glutamate: step 3/4. In terms of biological role, catalyzes the NADPH-dependent reduction of N-acetyl-5-glutamyl phosphate to yield N-acetyl-L-glutamate 5-semialdehyde. This Methylobacterium sp. (strain 4-46) protein is N-acetyl-gamma-glutamyl-phosphate reductase.